A 334-amino-acid chain; its full sequence is MVREEIAVSTRTLQWKCVESRADSKRLYYGRFMLSPLMKGQADTIGIAMRRALLGEIEGTCITRAKLDKVPHEYSTIVGIEESIHEIFMNLKEIVLRSNLYGTRNASICVRGPRYVTAQDIISPPSVEIVDTTQHIASLTEPIDLCIELQIQRDRGYRMKTPNKYQNGSYPIDAVSMPVRNANHSIHSYGNGNEKQEILFLEIWTNGSLTPKEALHEASRNLIDLFIPFLHAEEEGIRLEDNPNRFNIPFFTFHDGLANTNIRKKKKGIALKCIFIDQSELPPRTYNYLKRSNINTLLDLLSNSQEDFLKIEHFRIEDVKQILDILQKHFTIDC.

The alpha N-terminal domain (alpha-NTD) stretch occupies residues 1 to 232 (MVREEIAVST…IDLFIPFLHA (232 aa)). Residues 268–334 (GIALKCIFID…ILQKHFTIDC (67 aa)) are alpha C-terminal domain (alpha-CTD).

This sequence belongs to the RNA polymerase alpha chain family. In terms of assembly, in plastids the minimal PEP RNA polymerase catalytic core is composed of four subunits: alpha, beta, beta', and beta''. When a (nuclear-encoded) sigma factor is associated with the core the holoenzyme is formed, which can initiate transcription.

It localises to the plastid. The protein resides in the chloroplast. The catalysed reaction is RNA(n) + a ribonucleoside 5'-triphosphate = RNA(n+1) + diphosphate. Its function is as follows. DNA-dependent RNA polymerase catalyzes the transcription of DNA into RNA using the four ribonucleoside triphosphates as substrates. The sequence is that of DNA-directed RNA polymerase subunit alpha from Chloranthus spicatus (Chulantree).